The chain runs to 852 residues: Envelope glycoprotein gp160 (852 aa).

Positions 1-24 are cleaved as a signal peptide; that stretch reads MAHVNNYLLVTLLLISIYGYMGKN. Topologically, residues 25–677 are extracellular; that stretch reads FVTVFYGIPA…FTSWMAYIRL (653 aa). The N-linked (GlcNAc...) asparagine; by host glycan is linked to Asn-37. A disulfide bridge connects residues Cys-44 and Cys-57. Residues Asn-70, Asn-114, Asn-148, Asn-195, Asn-205, Asn-237, Asn-247, Asn-270, Asn-276, Asn-287, and Asn-298 are each glycosylated (N-linked (GlcNAc...) asparagine; by host). 4 cysteine pairs are disulfide-bonded: Cys-101/Cys-213, Cys-108/Cys-204, Cys-113/Cys-162, and Cys-236/Cys-248. The tract at residues 113–161 is V1; the sequence is CNKTWSSASKETTTSSASLRSSTQTLLNEDSKCIQNDSCAGIGLEEMID. The interval 162-204 is V2; that stretch reads CQFKMTGLKRDESKQYKDTWYKQDLVCEKGTRSNESKCYIKTC. The segment at 303-335 is V3; it reads CKRPGNKMVVPIRTVSGILFHSQPINKRPKQAW. Cys-303 and Cys-336 are joined by a disulfide. 7 N-linked (GlcNAc...) asparagine; by host glycosylation sites follow: Asn-341, Asn-364, Asn-396, Asn-406, Asn-445, Asn-461, and Asn-464. Cystine bridges form between Cys-388–Cys-444 and Cys-395–Cys-417. The tract at residues 395 to 417 is V4; the sequence is CNMTFFLNWVENRTGLKRNYASC. The tract at residues 461–467 is V5; it reads NLTNITV. The interval 510 to 530 is fusion peptide; it reads GVLVLGFLGFLATAGSAMGAA. An immunosuppression region spans residues 573–589; it reads LQARVTAIEKYLKDQAQ. Asn-609, Asn-618, and Asn-634 each carry an N-linked (GlcNAc...) asparagine; by host glycan. The stretch at 622-648 forms a coiled coil; the sequence is QQWERQVRFLDANITKLLEEAQIQQEK. The segment at 655-676 is MPER; binding to GalCer; the sequence is KLNQWDIFSNWFDFTSWMAYIR. The chain crosses the membrane as a helical span at residues 678-698; sequence GLYIVIGIVVLRIAIYIIQML. Residues 699 to 852 are Cytoplasmic-facing; that stretch reads ARLRKGYRPV…IRQGAELALL (154 aa). The short motif at 705–708 is the YXXV motif; contains endocytosis signal element; sequence YRPV. The interval 713–740 is disordered; that stretch reads PSYTQQIPIRKDRGQPANEETEEGGGNN. Cys-771 carries S-palmitoyl cysteine; by host lipidation. The Di-leucine internalization motif signature appears at 851–852; sequence LL.

In terms of assembly, the mature envelope protein (Env) consists of a homotrimer of non-covalently associated gp120-gp41 heterodimers. The resulting complex protrudes from the virus surface as a spike. There seems to be as few as 10 spikes on the average virion. Interacts with human CD4, CCR5 and CXCR4, to form a P4HB/PDI-CD4-CXCR4-gp120 complex. Gp120 also interacts with the C-type lectins CD209/DC-SIGN and CLEC4M/DC-SIGNR (collectively referred to as DC-SIGN(R)). Gp120 and gp41 interact with GalCer. As to quaternary structure, the mature envelope protein (Env) consists of a homotrimer of non-covalently associated gp120-gp41 heterodimers. The resulting complex protrudes from the virus surface as a spike. There seems to be as few as 10 spikes on the average virion. Specific enzymatic cleavages in vivo yield mature proteins. Envelope glycoproteins are synthesized as an inactive precursor that is heavily N-glycosylated and processed likely by host cell furin in the Golgi to yield the mature SU and TM proteins. The cleavage site between SU and TM requires the minimal sequence [KR]-X-[KR]-R. In terms of processing, palmitoylation of the transmembrane protein and of Env polyprotein (prior to its proteolytic cleavage) is essential for their association with host cell membrane lipid rafts. Palmitoylation is therefore required for envelope trafficking to classical lipid rafts, but not for viral replication.

It is found in the virion membrane. Its subcellular location is the host cell membrane. The protein resides in the host endosome membrane. The surface protein gp120 (SU) attaches the virus to the host lymphoid cell by binding to the primary receptor CD4. This interaction induces a structural rearrangement creating a high affinity binding site for a chemokine coreceptor like CXCR4 and/or CCR5. This peculiar 2 stage receptor-interaction strategy allows gp120 to maintain the highly conserved coreceptor-binding site in a cryptic conformation, protected from neutralizing antibodies. Since CD4 also displays a binding site for the disulfide-isomerase P4HB/PDI, a P4HB/PDI-CD4-CXCR4-gp120 complex may form. In that complex, P4HB/PDI could reach and reduce gp120 disulfide bonds, causing major conformational changes in gp120. TXN, another PDI family member could also be involved in disulfide rearrangements in Env during fusion. These changes are transmitted to the transmembrane protein gp41 and are thought to activate its fusogenic potential by unmasking its fusion peptide. Its function is as follows. The surface protein gp120 is a ligand for CD209/DC-SIGN and CLEC4M/DC-SIGNR, which are respectively found on dendritic cells (DCs), and on endothelial cells of liver sinusoids and lymph node sinuses. These interactions allow capture of viral particles at mucosal surfaces by these cells and subsequent transmission to permissive cells. DCs are professional antigen presenting cells, critical for host immunity by inducing specific immune responses against a broad variety of pathogens. They act as sentinels in various tissues where they take up antigen, process it, and present it to T-cells following migration to lymphoid organs. HIV subverts the migration properties of dendritic cells to gain access to CD4+ T-cells in lymph nodes. Virus transmission to permissive T-cells occurs either in trans (without DCs infection, through viral capture and transmission), or in cis (following DCs productive infection, through the usual CD4-gp120 interaction), thereby inducing a robust infection. In trans infection, bound virions remain infectious over days and it is proposed that they are not degraded, but protected in non-lysosomal acidic organelles within the DCs close to the cell membrane thus contributing to the viral infectious potential during DCs' migration from the periphery to the lymphoid tissues. On arrival at lymphoid tissues, intact virions recycle back to DCs' cell surface allowing virus transmission to CD4+ T-cells. Virion capture also seems to lead to MHC-II-restricted viral antigen presentation, and probably to the activation of HIV-specific CD4+ cells. Functionally, the transmembrane protein gp41 (TM) acts as a class I viral fusion protein. Under the current model, the protein has at least 3 conformational states: pre-fusion native state, pre-hairpin intermediate state, and post-fusion hairpin state. During fusion of viral and target intracellular membranes, the coiled coil regions (heptad repeats) assume a trimer-of-hairpins structure, positioning the fusion peptide in close proximity to the C-terminal region of the ectodomain. The formation of this structure appears to drive apposition and subsequent fusion of viral and target cell membranes. Complete fusion occurs in host cell endosomes and is dynamin-dependent, however some lipid transfer might occur at the plasma membrane. The virus undergoes clathrin-dependent internalization long before endosomal fusion, thus minimizing the surface exposure of conserved viral epitopes during fusion and reducing the efficacy of inhibitors targeting these epitopes. Membranes fusion leads to delivery of the nucleocapsid into the cytoplasm. In terms of biological role, the envelope glycoprotein gp160 precursor down-modulates cell surface CD4 antigen by interacting with it in the endoplasmic reticulum and blocking its transport to the cell surface. The gp120-gp41 heterodimer seems to contribute to T-cell depletion during HIV-1 infection. The envelope glycoproteins expressed on the surface of infected cells induce apoptosis through an interaction with uninfected cells expressing the receptor (CD4) and the coreceptors CXCR4 or CCR5. This type of bystander killing may be obtained by at least three distinct mechanisms. First, the interaction between the 2 cells can induce cellular fusion followed by nuclear fusion within the syncytium. Syncytia are condemned to die from apoptosis. Second, the 2 interacting cells may not fuse entirely and simply exchange plasma membrane lipids, after a sort of hemifusion process, followed by rapid death. Third, it is possible that virus-infected cells, on the point of undergoing apoptosis, fuse with CD4-expressing cells, in which case apoptosis is rapidly transmitted from one cell to the other and thus occurs in a sort of contagious fashion. Its function is as follows. The gp120-gp41 heterodimer allows rapid transcytosis of the virus through CD4 negative cells such as simple epithelial monolayers of the intestinal, rectal and endocervical epithelial barriers. Both gp120 and gp41 specifically recognize glycosphingolipids galactosyl-ceramide (GalCer) or 3' sulfo-galactosyl-ceramide (GalS) present in the lipid rafts structures of epithelial cells. Binding to these alternative receptors allows the rapid transcytosis of the virus through the epithelial cells. This transcytotic vesicle-mediated transport of virions from the apical side to the basolateral side of the epithelial cells does not involve infection of the cells themselves. The protein is Envelope glycoprotein gp160 (env) of Human immunodeficiency virus type 2 subtype B (isolate EHO) (HIV-2).